The chain runs to 306 residues: Homoserine O-acetyltransferase (306 aa).

Cys142 (acyl-thioester intermediate) is an active-site residue. The substrate site is built by Lys163 and Ser192. His235 serves as the catalytic Proton acceptor. Glu237 is a catalytic residue. Arg249 contacts substrate.

This sequence belongs to the MetA family.

The protein localises to the cytoplasm. The catalysed reaction is L-homoserine + acetyl-CoA = O-acetyl-L-homoserine + CoA. Its pathway is amino-acid biosynthesis; L-methionine biosynthesis via de novo pathway; O-acetyl-L-homoserine from L-homoserine: step 1/1. Functionally, transfers an acetyl group from acetyl-CoA to L-homoserine, forming acetyl-L-homoserine. The chain is Homoserine O-acetyltransferase from Brevibacillus brevis (strain 47 / JCM 6285 / NBRC 100599).